Reading from the N-terminus, the 119-residue chain is Large ribosomal subunit protein bL20 (119 aa).

The protein belongs to the bacterial ribosomal protein bL20 family.

Functionally, binds directly to 23S ribosomal RNA and is necessary for the in vitro assembly process of the 50S ribosomal subunit. It is not involved in the protein synthesizing functions of that subunit. The protein is Large ribosomal subunit protein bL20 of Nitrosomonas europaea (strain ATCC 19718 / CIP 103999 / KCTC 2705 / NBRC 14298).